Reading from the N-terminus, the 295-residue chain is METSMPEYYEVFGDFHGVLMDKLFTKYWEDVETFSARPDDLLVVTYPKSGSTWIGEIVDMIYKEGDVEKCKEDAIFNRIPYLECRNEDLINGIKQLKEKESPRIVKTHLPAKLLPASFWEKNCKIIYLCRNAKDVVVSYYYFFLIIKSYPNPKSFSEFVEKFMEGQVPYGSWYDHVKSWWEKSKNSRVLFMFYEDMKEDIRREVVKLIEFLERDPLAELVDKIIQHTSFQEMKNNPCTNYSMLPETMIDLKVSPFMRKGIVGDWRNHFPEALRERFEEHYQRHMKDCPVKFRAEL.

48–53 provides a ligand contact to 3'-phosphoadenylyl sulfate; it reads KSGSTW. 106–108 is a binding site for substrate; sequence KTH. Catalysis depends on His-108, which acts as the Proton acceptor. The 3'-phosphoadenylyl sulfate site is built by Arg-130 and Ser-138. Ser-156 carries the post-translational modification Phosphoserine. Residues Tyr-193, 227-232, and 257-259 each bind 3'-phosphoadenylyl sulfate; these read TSFQEM and RKG.

This sequence belongs to the sulfotransferase 1 family. As to quaternary structure, homodimer. As to expression, liver of young mature males and uterus.

The protein resides in the cytoplasm. It localises to the cytosol. The enzyme catalyses estrone + 3'-phosphoadenylyl sulfate = estrone 3-sulfate + adenosine 3',5'-bisphosphate + H(+). The catalysed reaction is (24S)-hydroxycholesterol + 3'-phosphoadenylyl sulfate = (24S)-hydroxycholesterol 3-sulfate + adenosine 3',5'-bisphosphate + H(+). It carries out the reaction 17beta-estradiol + 3'-phosphoadenylyl sulfate = 17beta-estradiol 3-sulfate + adenosine 3',5'-bisphosphate + H(+). It catalyses the reaction 3beta-hydroxyandrost-5-en-17-one + 3'-phosphoadenylyl sulfate = dehydroepiandrosterone 3-sulfate + adenosine 3',5'-bisphosphate + H(+). The enzyme catalyses 4-ethylphenol + 3'-phosphoadenylyl sulfate = 4-ethylphenyl sulfate + adenosine 3',5'-bisphosphate + H(+). Its activity is regulated as follows. Inhibited by estradiol. Sulfotransferase that utilizes 3'-phospho-5'-adenylyl sulfate (PAPS) as sulfonate donor to catalyze the sulfate conjugation of estradiol and estrone. Is a key enzyme in estrogen homeostasis, the sulfation of estrogens leads to their inactivation. Also sulfates dehydroepiandrosterone (DHEA), pregnenolone, (24S)-hydroxycholesterol and xenobiotic compounds like ethinylestradiol, equalenin, diethyl stilbesterol and 1-naphthol at significantly lower efficiency. Does not sulfonate cortisol, testosterone and dopamine. May play a role in gut microbiota-host metabolic interaction. O-sulfonates 4-ethylphenol (4-EP), a dietary tyrosine-derived metabolite produced by gut bacteria. The product 4-EPS crosses the blood-brain barrier and may negatively regulate oligodendrocyte maturation and myelination, affecting the functional connectivity of different brain regions associated with the limbic system. This is Sulfotransferase 1E1 from Rattus norvegicus (Rat).